The primary structure comprises 330 residues: Atypical chemokine receptor 1 (330 aa).

At 1–57 (MGNCLYPVADDNSTKLAIKEDFLIDFPEDYYPDYNETDVEAAAPCHSCSLLNYSSLP) the chain is on the extracellular side. N-linked (GlcNAc...) asparagine glycans are attached at residues Asn-12, Asn-35, and Asn-52. Disulfide bonds link Cys-45–Cys-270 and Cys-123–Cys-189. A helical transmembrane segment spans residues 58-78 (FFILVSILGILASGTILYALL). At 79–89 (RPLFRWQLYQD) the chain is on the cytoplasmic side. Residues 90–110 (RSTLVQLAVGSALFSIVVPIL) form a helical membrane-spanning segment. At 111 to 123 (ARGLSGALITSLC) the chain is on the extracellular side. A helical membrane pass occupies residues 124–147 (HLAHLVAYGSAFAQALLIGYHACL). Topologically, residues 148 to 160 (GPQLGAGQVPGLR) are cytoplasmic. Residues 161–181 (LGVTVGLWGVAALLSLPVVLG) traverse the membrane as a helical segment. The Extracellular portion of the chain corresponds to 182–201 (SDTSQGLCTVTFSGEWETLR). A helical membrane pass occupies residues 202 to 222 (YIHAAACFAIFVLLPLGLLGT). The Cytoplasmic portion of the chain corresponds to 223–238 (KGLKTVLGRAPCPWVD). The chain crosses the membrane as a helical span at residues 239 to 259 (VLWVWFIFWWPQGMTLGLDSL). Residues 260–281 (VRSKAIVVSTCPAQQALDMLLD) are Extracellular-facing. A helical transmembrane segment spans residues 282–302 (VAEALAILHCVATPLLLAWVC). Residues 303-330 (YQATHTSPPSLPLPTTQTSHLDTLGGKS) are Cytoplasmic-facing.

This sequence belongs to the G-protein coupled receptor 1 family. Atypical chemokine receptor subfamily.

It localises to the early endosome. The protein localises to the recycling endosome. The protein resides in the membrane. Functionally, atypical chemokine receptor that controls chemokine levels and localization via high-affinity chemokine binding that is uncoupled from classic ligand-driven signal transduction cascades, resulting instead in chemokine sequestration, degradation, or transcytosis. Also known as interceptor (internalizing receptor) or chemokine-scavenging receptor or chemokine decoy receptor. Has a promiscuous chemokine-binding profile, interacting with inflammatory chemokines of both the CXC and the CC subfamilies but not with homeostatic chemokines. Acts as a receptor for chemokines including CCL2, CCL5, CCL7, CCL11, CCL13, CCL14, CCL17, CXCL5, CXCL6, IL8/CXCL8, CXCL11, GRO, RANTES, MCP-1 and TARC. May regulate chemokine bioavailability and, consequently, leukocyte recruitment through two distinct mechanisms: when expressed in endothelial cells, it sustains the abluminal to luminal transcytosis of tissue-derived chemokines and their subsequent presentation to circulating leukocytes; when expressed in erythrocytes, serves as blood reservoir of cognate chemokines but also as a chemokine sink, buffering potential surges in plasma chemokine levels. The protein is Atypical chemokine receptor 1 (ACKR1) of Bos taurus (Bovine).